A 248-amino-acid chain; its full sequence is MRFDVVTIFPEYLSVLDVSLLGRARREGLVDVHVHDLRDFTVDRHRTVDDTPYGGGAGMVMKPEPWALALEHVAAQGPAAPAPADPASAEPGDRPVLLVPTPSGERFTQRFARELAGREHVAIACGRYEGIDERVFGWAEELFEVRLVSLGDYVLNGGEVAALAMIEAVGRLVPGVVGNPASLVEESHEDGLLEYPVYTKPADWRGRAVPPVLLSGDHGKVAAWRRTQQEERTRERRPDLWAAFDSED.

Residues glycine 126 and leucine 150–leucine 155 each bind S-adenosyl-L-methionine. Residues tryptophan 224 to aspartate 248 are disordered. The span at threonine 227–aspartate 239 shows a compositional bias: basic and acidic residues.

This sequence belongs to the RNA methyltransferase TrmD family. In terms of assembly, homodimer.

The protein resides in the cytoplasm. It catalyses the reaction guanosine(37) in tRNA + S-adenosyl-L-methionine = N(1)-methylguanosine(37) in tRNA + S-adenosyl-L-homocysteine + H(+). Its function is as follows. Specifically methylates guanosine-37 in various tRNAs. This Micrococcus luteus (strain ATCC 4698 / DSM 20030 / JCM 1464 / CCM 169 / CCUG 5858 / IAM 1056 / NBRC 3333 / NCIMB 9278 / NCTC 2665 / VKM Ac-2230) (Micrococcus lysodeikticus) protein is tRNA (guanine-N(1)-)-methyltransferase.